Consider the following 189-residue polypeptide: FUN14 domain-containing protein 2 (189 aa).

Residues 1-80 (METSAPRAGS…GQESGPSAEK (80 aa)) lie on the Cytoplasmic side of the membrane. Serine 10 and serine 53 each carry phosphoserine. A helical transmembrane segment spans residues 81-101 (YSVATQLFIGGVTGWCTGFIF). Residues 102–107 (QNVGKL) lie on the Mitochondrial intermembrane side of the membrane. The helical transmembrane segment at 108–128 (AATAVGGGFFLLQLANHTGYI) threads the bilayer. Residues 129–164 (KVDWQRVEKDMKKAKEQLKIRKSNQMPTEVRSKAEE) are Cytoplasmic-facing. Position 151 is a phosphoserine (serine 151). The chain crosses the membrane as a helical span at residues 165–185 (VVSFVKKNVLVTGGFFGGFLL). Over 186 to 189 (GMAS) the chain is Mitochondrial intermembrane.

The protein belongs to the FUN14 family.

The protein localises to the mitochondrion outer membrane. It is found in the nucleus. Binds directly and specifically 1,2-Diacyl-sn-glycero-3-phospho-(1'-myo-inositol-3',4',5'-bisphosphate) (PIP3) leading to the recruitment of PIP3 to mitochondria and may play a role in the regulation of the platelet activation via AKT/GSK3B/cGMP signaling pathways. May act as transcription factor that regulates SREBP1 (isoform SREBP-1C) expression in order to modulate triglyceride (TG) homeostasis in hepatocytes. This is FUN14 domain-containing protein 2 from Macaca mulatta (Rhesus macaque).